Reading from the N-terminus, the 361-residue chain is 3-dehydroquinate synthase (361 aa).

Residues 106–110 (GVVGD), 130–131 (TT), Lys-143, and Lys-152 each bind NAD(+). Glu-185, His-248, and His-265 together coordinate Zn(2+).

Belongs to the sugar phosphate cyclases superfamily. Dehydroquinate synthase family. NAD(+) serves as cofactor. The cofactor is Co(2+). It depends on Zn(2+) as a cofactor.

Its subcellular location is the cytoplasm. The catalysed reaction is 7-phospho-2-dehydro-3-deoxy-D-arabino-heptonate = 3-dehydroquinate + phosphate. Its pathway is metabolic intermediate biosynthesis; chorismate biosynthesis; chorismate from D-erythrose 4-phosphate and phosphoenolpyruvate: step 2/7. Functionally, catalyzes the conversion of 3-deoxy-D-arabino-heptulosonate 7-phosphate (DAHP) to dehydroquinate (DHQ). This chain is 3-dehydroquinate synthase, found in Leptospira interrogans serogroup Icterohaemorrhagiae serovar copenhageni (strain Fiocruz L1-130).